A 242-amino-acid polypeptide reads, in one-letter code: DNA repair protein RecO (242 aa).

It belongs to the RecO family.

Functionally, involved in DNA repair and RecF pathway recombination. The chain is DNA repair protein RecO from Vibrio atlanticus (strain LGP32) (Vibrio splendidus (strain Mel32)).